A 557-amino-acid chain; its full sequence is Dihydroxy-acid dehydratase (557 aa).

A Mg(2+)-binding site is contributed by Asp-78. Residue Cys-119 participates in [2Fe-2S] cluster binding. Mg(2+) is bound by residues Asp-120 and Lys-121. At Lys-121 the chain carries N6-carboxylysine. Residue Cys-192 coordinates [2Fe-2S] cluster. Glu-443 contributes to the Mg(2+) binding site. The active-site Proton acceptor is the Ser-469.

The protein belongs to the IlvD/Edd family. Homodimer. [2Fe-2S] cluster is required as a cofactor. Mg(2+) serves as cofactor.

The catalysed reaction is (2R)-2,3-dihydroxy-3-methylbutanoate = 3-methyl-2-oxobutanoate + H2O. The enzyme catalyses (2R,3R)-2,3-dihydroxy-3-methylpentanoate = (S)-3-methyl-2-oxopentanoate + H2O. It functions in the pathway amino-acid biosynthesis; L-isoleucine biosynthesis; L-isoleucine from 2-oxobutanoate: step 3/4. It participates in amino-acid biosynthesis; L-valine biosynthesis; L-valine from pyruvate: step 3/4. Functions in the biosynthesis of branched-chain amino acids. Catalyzes the dehydration of (2R,3R)-2,3-dihydroxy-3-methylpentanoate (2,3-dihydroxy-3-methylvalerate) into 2-oxo-3-methylpentanoate (2-oxo-3-methylvalerate) and of (2R)-2,3-dihydroxy-3-methylbutanoate (2,3-dihydroxyisovalerate) into 2-oxo-3-methylbutanoate (2-oxoisovalerate), the penultimate precursor to L-isoleucine and L-valine, respectively. This is Dihydroxy-acid dehydratase from Sulfurihydrogenibium sp. (strain YO3AOP1).